A 37-amino-acid chain; its full sequence is Large ribosomal subunit protein bL36 (37 aa).

The protein belongs to the bacterial ribosomal protein bL36 family.

The sequence is that of Large ribosomal subunit protein bL36 from Thermomicrobium roseum (strain ATCC 27502 / DSM 5159 / P-2).